We begin with the raw amino-acid sequence, 70 residues long: MTSETEKRIIALEETIAHQAKTIEELSDQLAEQWKVVEQTRAKLDRLTERFLSLEEQSLDAPAITRPPHY.

It belongs to the SlyX family.

The chain is Protein SlyX homolog from Agrobacterium fabrum (strain C58 / ATCC 33970) (Agrobacterium tumefaciens (strain C58)).